A 263-amino-acid chain; its full sequence is Antigen 10-3 (263 aa).

The N-terminal stretch at 1–21 (MNIYLIGILCIVGLIISQGST) is a signal peptide. The segment at 70 to 207 (GNKKDKQPTQ…QINDGTSDKP (138 aa)) is disordered. Positions 78-90 (TQKTTPKPTTPKQ) are enriched in low complexity. 5 consecutive repeat copies span residues 81-107 (TTPK…TIKR), 108-134 (TTPK…TIKR), 135-161 (TTPK…TIKR), 162-188 (TTPK…TIKR), and 189-206 (TTPK…TSDK). The segment at 81–189 (TTPKPTTPKQ…TSDTHTIKRT (109 aa)) is 5 X 27 AA tandem repeats. Composition is skewed to basic and acidic residues over residues 95–104 (TSDKTSDTHT), 122–131 (TSDKTSDTHT), 149–158 (TSDKTSDTHT), and 176–185 (TSDKTSDTHT).

In Schistosoma mansoni (Blood fluke), this protein is Antigen 10-3.